We begin with the raw amino-acid sequence, 91 residues long: Methanol dehydrogenase [cytochrome c] subunit 2 (91 aa).

The N-terminal stretch at 1–22 (MKHVLTLLALASVFAVSNQALA) is a signal peptide. Residues Cys28 and Cys34 are joined by a disulfide bond.

Belongs to the methanol dehydrogenase subunit 2 family. In terms of assembly, heterotetramer composed of 2 alpha and 2 beta subunits.

The protein localises to the cell inner membrane. The catalysed reaction is 2 Fe(III)-[cytochrome cL] + a primary alcohol = 2 Fe(II)-[cytochrome cL] + an aldehyde + 2 H(+). Catalyzes the oxidation of primary alcohols including methanol. The chain is Methanol dehydrogenase [cytochrome c] subunit 2 (moxI) from Methylophilus methylotrophus (Bacterium W3A1).